A 169-amino-acid chain; its full sequence is UPF0303 protein BCAN_A1444 (169 aa).

Belongs to the UPF0303 family.

The polypeptide is UPF0303 protein BCAN_A1444 (Brucella canis (strain ATCC 23365 / NCTC 10854 / RM-666)).